Here is a 101-residue protein sequence, read N- to C-terminus: uncharacterized protein (101 aa).

It localises to the plastid. It is found in the chloroplast. This is an uncharacterized protein from Chlamydomonas reinhardtii (Chlamydomonas smithii).